A 392-amino-acid chain; its full sequence is Formate-dependent phosphoribosylglycinamide formyltransferase (392 aa).

N(1)-(5-phospho-beta-D-ribosyl)glycinamide is bound by residues 22–23 and Glu82; that span reads EL. Residues Arg114, Lys155, 160 to 165, 195 to 198, and Glu203 each bind ATP; these read SSGKGQ and EGVV. Residues 119–308 form the ATP-grasp domain; that stretch reads RLAAEELWVP…EFALHVRAFL (190 aa). The Mg(2+) site is built by Glu267 and Glu279. N(1)-(5-phospho-beta-D-ribosyl)glycinamide-binding positions include Asp286, Lys355, and 362–363; that span reads RR.

It belongs to the PurK/PurT family. In terms of assembly, homodimer.

The catalysed reaction is N(1)-(5-phospho-beta-D-ribosyl)glycinamide + formate + ATP = N(2)-formyl-N(1)-(5-phospho-beta-D-ribosyl)glycinamide + ADP + phosphate + H(+). The protein operates within purine metabolism; IMP biosynthesis via de novo pathway; N(2)-formyl-N(1)-(5-phospho-D-ribosyl)glycinamide from N(1)-(5-phospho-D-ribosyl)glycinamide (formate route): step 1/1. Involved in the de novo purine biosynthesis. Catalyzes the transfer of formate to 5-phospho-ribosyl-glycinamide (GAR), producing 5-phospho-ribosyl-N-formylglycinamide (FGAR). Formate is provided by PurU via hydrolysis of 10-formyl-tetrahydrofolate. The protein is Formate-dependent phosphoribosylglycinamide formyltransferase of Erwinia tasmaniensis (strain DSM 17950 / CFBP 7177 / CIP 109463 / NCPPB 4357 / Et1/99).